The chain runs to 375 residues: Queuine tRNA-ribosyltransferase (375 aa).

The active-site Proton acceptor is aspartate 89. Substrate is bound by residues 89–93, aspartate 143, glutamine 187, and glycine 214; that span reads DSGGF. Residues 245 to 251 form an RNA binding region; sequence GVGKPED. The active-site Nucleophile is the aspartate 264. The tract at residues 269-273 is RNA binding; important for wobble base 34 recognition; it reads TRNAR. Cysteine 302, cysteine 304, cysteine 307, and histidine 333 together coordinate Zn(2+).

The protein belongs to the queuine tRNA-ribosyltransferase family. Homodimer. Within each dimer, one monomer is responsible for RNA recognition and catalysis, while the other monomer binds to the replacement base PreQ1. Requires Zn(2+) as cofactor.

It carries out the reaction 7-aminomethyl-7-carbaguanine + guanosine(34) in tRNA = 7-aminomethyl-7-carbaguanosine(34) in tRNA + guanine. It functions in the pathway tRNA modification; tRNA-queuosine biosynthesis. Catalyzes the base-exchange of a guanine (G) residue with the queuine precursor 7-aminomethyl-7-deazaguanine (PreQ1) at position 34 (anticodon wobble position) in tRNAs with GU(N) anticodons (tRNA-Asp, -Asn, -His and -Tyr). Catalysis occurs through a double-displacement mechanism. The nucleophile active site attacks the C1' of nucleotide 34 to detach the guanine base from the RNA, forming a covalent enzyme-RNA intermediate. The proton acceptor active site deprotonates the incoming PreQ1, allowing a nucleophilic attack on the C1' of the ribose to form the product. After dissociation, two additional enzymatic reactions on the tRNA convert PreQ1 to queuine (Q), resulting in the hypermodified nucleoside queuosine (7-(((4,5-cis-dihydroxy-2-cyclopenten-1-yl)amino)methyl)-7-deazaguanosine). This is Queuine tRNA-ribosyltransferase from Salmonella paratyphi A (strain ATCC 9150 / SARB42).